Reading from the N-terminus, the 246-residue chain is UPF0309 protein TTE0306 (246 aa).

The region spanning 31–212 is the SIS domain; that stretch reads ITESLISEDS…EAEIITNMLE (182 aa).

This sequence belongs to the UPF0309 family.

The polypeptide is UPF0309 protein TTE0306 (Caldanaerobacter subterraneus subsp. tengcongensis (strain DSM 15242 / JCM 11007 / NBRC 100824 / MB4) (Thermoanaerobacter tengcongensis)).